A 596-amino-acid polypeptide reads, in one-letter code: Membrane protein insertase YidC (596 aa).

The next 6 membrane-spanning stretches (helical) occupy residues 4–24 (NKLIGLILISILLIVYTHFFD), 332–352 (LGWPIVKWINLYLIIPIFSFI), 359–379 (YGLVILILVIFIKLLLLPLSY), 425–445 (LSGCIPVLLQMPILLAMFNFF), 468–488 (IINLPFQIPFYGSHVSLFTLL), and 518–538 (PITFMFILNSFPAGLSFYYFV). Positions 565–584 (KNKEKSANNKEGSFKKRFQD) are enriched in basic and acidic residues. Residues 565 to 596 (KNKEKSANNKEGSFKKRFQDAIKASASHKGKK) are disordered.

The protein belongs to the OXA1/ALB3/YidC family. Type 1 subfamily. As to quaternary structure, interacts with the Sec translocase complex via SecD. Specifically interacts with transmembrane segments of nascent integral membrane proteins during membrane integration.

Its subcellular location is the cell inner membrane. Its function is as follows. Required for the insertion and/or proper folding and/or complex formation of integral membrane proteins into the membrane. Involved in integration of membrane proteins that insert both dependently and independently of the Sec translocase complex, as well as at least some lipoproteins. Aids folding of multispanning membrane proteins. The sequence is that of Membrane protein insertase YidC from Amoebophilus asiaticus (strain 5a2).